We begin with the raw amino-acid sequence, 303 residues long: Zinc import ATP-binding protein ZnuC (303 aa).

The region spanning 17 to 232 (VSLENVGVLR…PEYVRLFGSR (216 aa)) is the ABC transporter domain. 49–56 (GPNGSGKS) serves as a coordination point for ATP. The tract at residues 263–303 (DHCHPDDGHHAHEHGHAGHEHDHDHPDHAHPHAHEAGERHA) is disordered.

It belongs to the ABC transporter superfamily. Zinc importer (TC 3.A.1.15.5) family. As to quaternary structure, the complex is composed of two ATP-binding proteins (ZnuC), two transmembrane proteins (ZnuB) and a solute-binding protein (ZnuA).

The protein localises to the cell inner membrane. The enzyme catalyses Zn(2+)(out) + ATP(in) + H2O(in) = Zn(2+)(in) + ADP(in) + phosphate(in) + H(+)(in). Functionally, part of the ABC transporter complex ZnuABC involved in zinc import. Responsible for energy coupling to the transport system. In Rhizobium johnstonii (strain DSM 114642 / LMG 32736 / 3841) (Rhizobium leguminosarum bv. viciae), this protein is Zinc import ATP-binding protein ZnuC.